The sequence spans 421 residues: UDP-N-acetylglucosamine 1-carboxyvinyltransferase (421 aa).

22–23 is a binding site for phosphoenolpyruvate; the sequence is KN. Arg-93 contacts UDP-N-acetyl-alpha-D-glucosamine. Cys-117 functions as the Proton donor in the catalytic mechanism. Cys-117 is modified (2-(S-cysteinyl)pyruvic acid O-phosphothioketal). Residues 122–126, Asp-308, and Ile-330 each bind UDP-N-acetyl-alpha-D-glucosamine; that span reads RPVDL.

Belongs to the EPSP synthase family. MurA subfamily.

The protein localises to the cytoplasm. The catalysed reaction is phosphoenolpyruvate + UDP-N-acetyl-alpha-D-glucosamine = UDP-N-acetyl-3-O-(1-carboxyvinyl)-alpha-D-glucosamine + phosphate. It functions in the pathway cell wall biogenesis; peptidoglycan biosynthesis. Its function is as follows. Cell wall formation. Adds enolpyruvyl to UDP-N-acetylglucosamine. In Pseudomonas putida (strain GB-1), this protein is UDP-N-acetylglucosamine 1-carboxyvinyltransferase.